A 455-amino-acid polypeptide reads, in one-letter code: tRNA modification GTPase MnmE (455 aa).

3 residues coordinate (6S)-5-formyl-5,6,7,8-tetrahydrofolate: arginine 25, glutamate 85, and arginine 124. The region spanning 221-375 (GLSTAIIGRP…IEERINKLFF (155 aa)) is the TrmE-type G domain. Asparagine 231 serves as a coordination point for K(+). GTP is bound by residues 231–236 (NVGKSS), 250–256 (TDIEGTT), and 275–278 (DTAG). Serine 235 contacts Mg(2+). Positions 250, 252, and 255 each coordinate K(+). A Mg(2+)-binding site is contributed by threonine 256. Lysine 455 contacts (6S)-5-formyl-5,6,7,8-tetrahydrofolate.

The protein belongs to the TRAFAC class TrmE-Era-EngA-EngB-Septin-like GTPase superfamily. TrmE GTPase family. In terms of assembly, homodimer. Heterotetramer of two MnmE and two MnmG subunits. Requires K(+) as cofactor.

The protein resides in the cytoplasm. Functionally, exhibits a very high intrinsic GTPase hydrolysis rate. Involved in the addition of a carboxymethylaminomethyl (cmnm) group at the wobble position (U34) of certain tRNAs, forming tRNA-cmnm(5)s(2)U34. The chain is tRNA modification GTPase MnmE from Streptococcus mutans serotype c (strain ATCC 700610 / UA159).